Reading from the N-terminus, the 272-residue chain is Sulfate transporter CysZ (272 aa).

4 consecutive transmembrane segments (helical) span residues 29-49, 66-86, 148-168, and 219-239; these read FVIM…WLFI, WLSF…LLLF, IIAL…VPVL, and FVPV…TLMW.

This sequence belongs to the CysZ family.

It localises to the cell inner membrane. Its function is as follows. High affinity, high specificity proton-dependent sulfate transporter, which mediates sulfate uptake. Provides the sulfur source for the cysteine synthesis pathway. This chain is Sulfate transporter CysZ, found in Haemophilus influenzae (strain ATCC 51907 / DSM 11121 / KW20 / Rd).